The chain runs to 178 residues: Large ribosomal subunit protein bL25 (178 aa).

The protein belongs to the bacterial ribosomal protein bL25 family. CTC subfamily. As to quaternary structure, part of the 50S ribosomal subunit; part of the 5S rRNA/L5/L18/L25 subcomplex. Contacts the 5S rRNA. Binds to the 5S rRNA independently of L5 and L18.

Functionally, this is one of the proteins that binds to the 5S RNA in the ribosome where it forms part of the central protuberance. The sequence is that of Large ribosomal subunit protein bL25 from Helicobacter pylori (strain P12).